Reading from the N-terminus, the 345-residue chain is cAMP-responsive element modulator (345 aa).

The KID domain maps to 88-147; sequence VQVAAIAETDESAESEGVIDSHKRREILSRRPSYRKILNELSSDVPGVPKIEEERSEEEG. Residues serine 102, serine 129, serine 271, serine 274, and serine 277 each carry the phosphoserine modification. The bZIP domain occupies 286-345; sequence TRKRELRLMKNREAAKECRRRKKEYVKCLESRVAVLEVQNKKLIEELETLKDICSPKTDY. The segment at 287 to 312 is basic motif; it reads RKRELRLMKNREAAKECRRRKKEYVK. The leucine-zipper stretch occupies residues 314–335; it reads LESRVAVLEVQNKKLIEELETL.

It belongs to the bZIP family. As to quaternary structure, binds DNA as a dimer. Interacts with FHL5. Interacts with CDC34. May interact with TSSK4. In terms of processing, isoform 9 is ubiquitinated by CDC34 and RAD6B in order to be degraded by the proteasome. Stimulated by phosphorylation. Phosphorylated on Ser-116 by TSSK4 in vitro. As to expression, expressed in testes (round spermatids) (at protein level). Isoform 14 is the major activator form in testes.

The protein localises to the nucleus. Its subcellular location is the cytoplasm. Its function is as follows. Transcriptional regulator that binds the cAMP response element (CRE), a sequence present in many viral and cellular promoters. Isoforms are either transcriptional activators or repressors. Plays a role in spermatogenesis and is involved in spermatid maturation. In terms of biological role, may play a role in the regulation of the circadian clock: acts as a transcriptional repressor of the core circadian component PER1 by directly binding to cAMP response elements in its promoter. This chain is cAMP-responsive element modulator, found in Homo sapiens (Human).